The following is a 121-amino-acid chain: MARIAGVDLPRGKQIVIALTYIYGVGKTTAQKVLKNAGVPENVRQDDLTPEQEDKIRAALDSVKVEGDLRREVNLNIKRLMEIGSYRGIRHRRGLPVRGQNTKNNARTRKGKKASMAGKKK.

Positions 91-121 (HRRGLPVRGQNTKNNARTRKGKKASMAGKKK) are disordered. Residues 106–121 (ARTRKGKKASMAGKKK) show a composition bias toward basic residues.

Belongs to the universal ribosomal protein uS13 family. Part of the 30S ribosomal subunit. Forms a loose heterodimer with protein S19. Forms two bridges to the 50S subunit in the 70S ribosome.

In terms of biological role, located at the top of the head of the 30S subunit, it contacts several helices of the 16S rRNA. In the 70S ribosome it contacts the 23S rRNA (bridge B1a) and protein L5 of the 50S subunit (bridge B1b), connecting the 2 subunits; these bridges are implicated in subunit movement. Contacts the tRNAs in the A and P-sites. This chain is Small ribosomal subunit protein uS13, found in Lacticaseibacillus paracasei (strain ATCC 334 / BCRC 17002 / CCUG 31169 / CIP 107868 / KCTC 3260 / NRRL B-441) (Lactobacillus paracasei).